Reading from the N-terminus, the 447-residue chain is MLSQAWALALLCFLLSLWGSLPAVFLPQEQALSILHRPRRANGFLEELLPGSLERECREELCSFEEAHEIFRNEERTRQFWVSYNDGDQCASSPCQNGGSCEDQLRSYICFCPDGFEGRNCETDKQSQLICANDNGGCEQYCGADPGAGRFCWCHEGYALQADGVSCAPTVEYPCGKIPVLEKRNGSKPQGRIVGGHVCPKGECPWQAMLKLNGALLCGGTLVGPAWVVSAAHCFERLRSRGNLTAVLGEHDLSRVEGPEQERRVAQIIVPKQYVPGQTDHDVALLQLAQPVALGDHVAPLCLPDPDFADQTLAFVRFSAVSGWGQLLERGVTARKLMVVLVPRLLTQDCLQQSRQRPGGPVVTDNMFCAGYSDGSKDACKGDSGGPHATRFRGTWFLTGVVSWGEGCAAAGHFGIYTRVSRYTAWLRQLMGHPPSRQGFFQVPLLP.

Positions 1–23 are cleaved as a signal peptide; it reads MLSQAWALALLCFLLSLWGSLPA. The propeptide occupies 24-40; the sequence is VFLPQEQALSILHRPRR. The 45-residue stretch at 41–85 folds into the Gla domain; sequence ANGFLEELLPGSLERECREELCSFEEAHEIFRNEERTRQFWVSYN. 4-carboxyglutamate is present on residues E46, E47, E54, E56, E59, E60, E65, E66, E69, E74, and E75. An intrachain disulfide couples C57 to C62. One can recognise an EGF-like 1; calcium-binding domain in the interval 86 to 122; that stretch reads DGDQCASSPCQNGGSCEDQLRSYICFCPDGFEGRNCE. Intrachain disulfides connect C90–C101, C95–C110, C112–C121, C131–C142, C138–C152, C154–C167, C175–C302, C199–C204, C218–C234, and C350–C369. The O-linked (Glc...) serine glycan is linked to S92. The O-linked (Glc...) serine; alternate glycan is linked to S92. A glycan (O-linked (Xyl...) serine; alternate) is linked at S92. O-linked (Fuc) serine glycosylation occurs at S100. The EGF-like 2 domain maps to 127–168; that stretch reads SQLICANDNGGCEQYCGADPGAGRFCWCHEGYALQADGVSCA. N185 carries N-linked (GlcNAc...) asparagine glycosylation. Residues 193-432 form the Peptidase S1 domain; that stretch reads IVGGHVCPKG…YTAWLRQLMG (240 aa). H233 functions as the Charge relay system in the catalytic mechanism. N-linked (GlcNAc...) asparagine glycosylation is present at N243. Residue D282 is the Charge relay system of the active site. Position 378 (D378) interacts with substrate. Cysteines 380 and 408 form a disulfide. Catalysis depends on S384, which acts as the Charge relay system.

Belongs to the peptidase S1 family. As to quaternary structure, heterodimer of a light chain and a heavy chain linked by a disulfide bond. Post-translationally, the vitamin K-dependent, enzymatic carboxylation of some glutamate residues allows the modified protein to bind calcium. In terms of processing, O-glycosylated. O-fucosylated by POFUT1 on a conserved serine or threonine residue found in the consensus sequence C2-X(4,5)-[S/T]-C3 of EGF domains, where C2 and C3 are the second and third conserved cysteines. Can be either O-glucosylated or O-xylosylated at Ser-92 by POGLUT1. Plasma.

The protein localises to the secreted. It catalyses the reaction Selective cleavage of Arg-|-Ile bond in factor X to form factor Xa.. Functionally, initiates the extrinsic pathway of blood coagulation. Serine protease that circulates in the blood in a zymogen form. Factor VII is converted to factor VIIa by factor Xa, factor XIIa, factor IXa, or thrombin by minor proteolysis. In the presence of tissue factor and calcium ions, factor VIIa then converts factor X to factor Xa by limited proteolysis. Factor VIIa also converts factor IX to factor IXa in the presence of tissue factor and calcium. The chain is Coagulation factor VII (F7) from Bos taurus (Bovine).